Consider the following 723-residue polypeptide: Fatty acid oxidation complex subunit alpha (723 aa).

Residues 1 to 189 (MIYQAKTLQV…KVGLLDAIVD (189 aa)) form an enoyl-CoA hydratase/isomerase region. D296 contacts substrate. The tract at residues 311–723 (SQDTQHAAVL…FYSAQQVSAL (413 aa)) is 3-hydroxyacyl-CoA dehydrogenase. NAD(+)-binding positions include M325, D344, 401-403 (VVE), K408, and S430. Catalysis depends on H451, which acts as the For 3-hydroxyacyl-CoA dehydrogenase activity. N454 lines the NAD(+) pocket. Substrate contacts are provided by N501 and Y661.

This sequence in the N-terminal section; belongs to the enoyl-CoA hydratase/isomerase family. It in the C-terminal section; belongs to the 3-hydroxyacyl-CoA dehydrogenase family. In terms of assembly, heterotetramer of two alpha chains (FadB) and two beta chains (FadA).

It carries out the reaction a (3S)-3-hydroxyacyl-CoA + NAD(+) = a 3-oxoacyl-CoA + NADH + H(+). The catalysed reaction is a (3S)-3-hydroxyacyl-CoA = a (2E)-enoyl-CoA + H2O. The enzyme catalyses a 4-saturated-(3S)-3-hydroxyacyl-CoA = a (3E)-enoyl-CoA + H2O. It catalyses the reaction (3S)-3-hydroxybutanoyl-CoA = (3R)-3-hydroxybutanoyl-CoA. It carries out the reaction a (3Z)-enoyl-CoA = a 4-saturated (2E)-enoyl-CoA. The catalysed reaction is a (3E)-enoyl-CoA = a 4-saturated (2E)-enoyl-CoA. The protein operates within lipid metabolism; fatty acid beta-oxidation. Functionally, involved in the aerobic and anaerobic degradation of long-chain fatty acids via beta-oxidation cycle. Catalyzes the formation of 3-oxoacyl-CoA from enoyl-CoA via L-3-hydroxyacyl-CoA. It can also use D-3-hydroxyacyl-CoA and cis-3-enoyl-CoA as substrate. This is Fatty acid oxidation complex subunit alpha from Vibrio cholerae serotype O1 (strain ATCC 39315 / El Tor Inaba N16961).